The chain runs to 424 residues: Deoxyguanosinetriphosphate triphosphohydrolase-like protein (424 aa).

Positions 1-27 (MYPYSDADAFRRQPERAKSSQLRTSAV) are disordered. Over residues 8-18 (DAFRRQPERAK) the composition is skewed to basic and acidic residues. Positions 67 to 217 (RLTHSLEVAQ…MDFSDDIAYS (151 aa)) constitute an HD domain.

Belongs to the dGTPase family. Type 2 subfamily.

This is Deoxyguanosinetriphosphate triphosphohydrolase-like protein (dgt) from Corynebacterium glutamicum (strain ATCC 13032 / DSM 20300 / JCM 1318 / BCRC 11384 / CCUG 27702 / LMG 3730 / NBRC 12168 / NCIMB 10025 / NRRL B-2784 / 534).